The primary structure comprises 243 residues: PHO85 cyclin-like protein psl1 (243 aa).

Polar residues predominate over residues 211-224; that stretch reads ESPISHTPQQNQQD. The interval 211-231 is disordered; the sequence is ESPISHTPQQNQQDEQPRRPI.

Belongs to the cyclin family. PHO80 subfamily. In terms of assembly, forms a cyclin-CDK complex with pef1.

It is found in the cytoplasm. Its subcellular location is the nucleus. Cyclin partner of the cyclin-dependent kinase (CDK) pef1 (PHO85 homolog). This Schizosaccharomyces pombe (strain 972 / ATCC 24843) (Fission yeast) protein is PHO85 cyclin-like protein psl1 (psl1).